A 517-amino-acid polypeptide reads, in one-letter code: G-protein coupled receptor Mth (517 aa).

A signal peptide spans 1–27; the sequence is MKLFWVKRLLRISTVVVTLLLLQRTNA. Over 28-221 the chain is Extracellular; that stretch reads AIPDCDYYDT…CLISPSRMGQ (194 aa). 5 cysteine pairs are disulfide-bonded: C32-C86, C88-C93, C97-C191, C98-C109, and C153-C212. N-linked (GlcNAc...) asparagine glycosylation is found at N48 and N61. N126, N173, and N201 each carry an N-linked (GlcNAc...) asparagine glycan. A helical membrane pass occupies residues 222-242; sequence TVVMITSLVCMVLTITVYLFV. Residues 243–251 are Cytoplasmic-facing; that stretch reads KKLQNLHGK. A helical transmembrane segment spans residues 252-272; it reads CFMCYMVCLFMAYLLLLLNLW. The Extracellular segment spans residues 273–279; that stretch reads QMSQNFC. A helical membrane pass occupies residues 280–300; it reads ITAGFLGYFFVMAAFLWLSVI. Residues 301 to 323 lie on the Cytoplasmic side of the membrane; the sequence is SLHLWNTFSGSAHNANRFLSEHR. A helical membrane pass occupies residues 324–344; sequence FLAYNTYAWGMAVVLTGITYL. Residues 345–373 are Extracellular-facing; it reads ADKVVENEDWNPRMGFGGHCWICTQSWSA. Residues 374-394 form a helical membrane-spanning segment; the sequence is MLYFYGPMVFLIAFNITMFIL. The Cytoplasmic portion of the chain corresponds to 395-427; that stretch reads TANRIIGVKKDIQKFAHRQERKQKLNSDKQTYT. The helical transmembrane segment at 428–448 threads the bilayer; the sequence is FFLRLFIIMGLTWSLEIGSYI. Over 449–457 the chain is Extracellular; the sequence is SQFNQTWSN. N-linked (GlcNAc...) asparagine glycosylation occurs at N452. The helical transmembrane segment at 458 to 478 threads the bilayer; it reads VFLVADYLNWSQGIIIFILFV. Residues 479–517 lie on the Cytoplasmic side of the membrane; the sequence is LKRSTLRLLMESIRGEGEEVNDSEEEISLENTKYDRNVL.

It belongs to the G-protein coupled receptor 2 family. Mth subfamily. Homodimer.

It localises to the cell membrane. Involved in biological aging and stress response. Essential for adult survival. This Drosophila yakuba (Fruit fly) protein is G-protein coupled receptor Mth (mth).